The primary structure comprises 377 residues: Chaperone protein DnaJ (377 aa).

The J domain occupies 5 to 69; that stretch reads EYYDRLGLSK…QKRAAYDQYG (65 aa). Residues 133–215 form a CR-type zinc finger; sequence GAEKEIHYNR…CHGTGREKQS (83 aa). 8 residues coordinate Zn(2+): Cys146, Cys149, Cys163, Cys166, Cys189, Cys192, Cys203, and Cys206. CXXCXGXG motif repeat units follow at residues 146-153, 163-170, 189-196, and 203-210; these read CKTCSGSG, CGRCHGHG, CDVCHGTG, and CQTCHGTG.

Belongs to the DnaJ family. In terms of assembly, homodimer. The cofactor is Zn(2+).

The protein resides in the cytoplasm. In terms of biological role, participates actively in the response to hyperosmotic and heat shock by preventing the aggregation of stress-denatured proteins and by disaggregating proteins, also in an autonomous, DnaK-independent fashion. Unfolded proteins bind initially to DnaJ; upon interaction with the DnaJ-bound protein, DnaK hydrolyzes its bound ATP, resulting in the formation of a stable complex. GrpE releases ADP from DnaK; ATP binding to DnaK triggers the release of the substrate protein, thus completing the reaction cycle. Several rounds of ATP-dependent interactions between DnaJ, DnaK and GrpE are required for fully efficient folding. Also involved, together with DnaK and GrpE, in the DNA replication of plasmids through activation of initiation proteins. The protein is Chaperone protein DnaJ of Streptococcus thermophilus (strain CNRZ 1066).